We begin with the raw amino-acid sequence, 181 residues long: UPF0398 protein LMHCC_0668 (181 aa).

This sequence belongs to the UPF0398 family.

In Listeria monocytogenes serotype 4a (strain HCC23), this protein is UPF0398 protein LMHCC_0668.